We begin with the raw amino-acid sequence, 396 residues long: Acetate kinase (396 aa).

Asparagine 7 lines the Mg(2+) pocket. Lysine 14 serves as a coordination point for ATP. Arginine 91 contacts substrate. Aspartate 148 serves as the catalytic Proton donor/acceptor. ATP is bound by residues 208 to 212 (HLGNG), 283 to 285 (DFR), and 331 to 335 (GIGEN). Position 384 (glutamate 384) interacts with Mg(2+).

This sequence belongs to the acetokinase family. Homodimer. Requires Mg(2+) as cofactor. Mn(2+) is required as a cofactor.

The protein localises to the cytoplasm. It carries out the reaction acetate + ATP = acetyl phosphate + ADP. It participates in metabolic intermediate biosynthesis; acetyl-CoA biosynthesis; acetyl-CoA from acetate: step 1/2. In terms of biological role, catalyzes the formation of acetyl phosphate from acetate and ATP. Can also catalyze the reverse reaction. This Desulforamulus reducens (strain ATCC BAA-1160 / DSM 100696 / MI-1) (Desulfotomaculum reducens) protein is Acetate kinase.